A 455-amino-acid chain; its full sequence is Bifunctional protein GlmU (455 aa).

The tract at residues 1–225 (MEVVILAAGQ…IWETLGVNSK (225 aa)) is pyrophosphorylase. Residues 6–9 (LAAG), Lys-20, Gln-71, 76–77 (GT), 98–100 (YGD), Gly-135, Glu-150, Asn-165, and Asn-223 contribute to the UDP-N-acetyl-alpha-D-glucosamine site. Position 100 (Asp-100) interacts with Mg(2+). Asn-223 provides a ligand contact to Mg(2+). A linker region spans residues 226-246 (AQLAELERLHQRNIATRLMED). The tract at residues 247–455 (GVTLFDPSRI…KRPVKKKAGE (209 aa)) is N-acetyltransferase. UDP-N-acetyl-alpha-D-glucosamine-binding residues include Arg-329 and Lys-347. His-359 acts as the Proton acceptor in catalysis. 2 residues coordinate UDP-N-acetyl-alpha-D-glucosamine: Tyr-362 and Asn-373. Residues Ala-376, 382 to 383 (NY), Ser-401, Ala-419, and Arg-436 contribute to the acetyl-CoA site.

The protein in the N-terminal section; belongs to the N-acetylglucosamine-1-phosphate uridyltransferase family. It in the C-terminal section; belongs to the transferase hexapeptide repeat family. In terms of assembly, homotrimer. It depends on Mg(2+) as a cofactor.

The protein resides in the cytoplasm. The catalysed reaction is alpha-D-glucosamine 1-phosphate + acetyl-CoA = N-acetyl-alpha-D-glucosamine 1-phosphate + CoA + H(+). It catalyses the reaction N-acetyl-alpha-D-glucosamine 1-phosphate + UTP + H(+) = UDP-N-acetyl-alpha-D-glucosamine + diphosphate. It functions in the pathway nucleotide-sugar biosynthesis; UDP-N-acetyl-alpha-D-glucosamine biosynthesis; N-acetyl-alpha-D-glucosamine 1-phosphate from alpha-D-glucosamine 6-phosphate (route II): step 2/2. Its pathway is nucleotide-sugar biosynthesis; UDP-N-acetyl-alpha-D-glucosamine biosynthesis; UDP-N-acetyl-alpha-D-glucosamine from N-acetyl-alpha-D-glucosamine 1-phosphate: step 1/1. The protein operates within bacterial outer membrane biogenesis; LPS lipid A biosynthesis. In terms of biological role, catalyzes the last two sequential reactions in the de novo biosynthetic pathway for UDP-N-acetylglucosamine (UDP-GlcNAc). The C-terminal domain catalyzes the transfer of acetyl group from acetyl coenzyme A to glucosamine-1-phosphate (GlcN-1-P) to produce N-acetylglucosamine-1-phosphate (GlcNAc-1-P), which is converted into UDP-GlcNAc by the transfer of uridine 5-monophosphate (from uridine 5-triphosphate), a reaction catalyzed by the N-terminal domain. The protein is Bifunctional protein GlmU of Aromatoleum aromaticum (strain DSM 19018 / LMG 30748 / EbN1) (Azoarcus sp. (strain EbN1)).